Reading from the N-terminus, the 455-residue chain is ATP-dependent protease ATPase subunit HslU (455 aa).

Residues Val-23, 65–70 (GVGKTE), Asp-266, Glu-333, and Arg-405 each bind ATP.

It belongs to the ClpX chaperone family. HslU subfamily. A double ring-shaped homohexamer of HslV is capped on each side by a ring-shaped HslU homohexamer. The assembly of the HslU/HslV complex is dependent on binding of ATP.

It is found in the cytoplasm. In terms of biological role, ATPase subunit of a proteasome-like degradation complex; this subunit has chaperone activity. The binding of ATP and its subsequent hydrolysis by HslU are essential for unfolding of protein substrates subsequently hydrolyzed by HslV. HslU recognizes the N-terminal part of its protein substrates and unfolds these before they are guided to HslV for hydrolysis. In Xanthomonas euvesicatoria pv. vesicatoria (strain 85-10) (Xanthomonas campestris pv. vesicatoria), this protein is ATP-dependent protease ATPase subunit HslU.